The chain runs to 234 residues: Leucyl/phenylalanyl-tRNA--protein transferase (234 aa).

The protein belongs to the L/F-transferase family.

Its subcellular location is the cytoplasm. The enzyme catalyses N-terminal L-lysyl-[protein] + L-leucyl-tRNA(Leu) = N-terminal L-leucyl-L-lysyl-[protein] + tRNA(Leu) + H(+). It carries out the reaction N-terminal L-arginyl-[protein] + L-leucyl-tRNA(Leu) = N-terminal L-leucyl-L-arginyl-[protein] + tRNA(Leu) + H(+). It catalyses the reaction L-phenylalanyl-tRNA(Phe) + an N-terminal L-alpha-aminoacyl-[protein] = an N-terminal L-phenylalanyl-L-alpha-aminoacyl-[protein] + tRNA(Phe). Functions in the N-end rule pathway of protein degradation where it conjugates Leu, Phe and, less efficiently, Met from aminoacyl-tRNAs to the N-termini of proteins containing an N-terminal arginine or lysine. The sequence is that of Leucyl/phenylalanyl-tRNA--protein transferase from Dechloromonas aromatica (strain RCB).